Here is an 88-residue protein sequence, read N- to C-terminus: Small ribosomal subunit protein bS16c (88 aa).

Belongs to the bacterial ribosomal protein bS16 family.

It localises to the plastid. Its subcellular location is the chloroplast. The protein is Small ribosomal subunit protein bS16c of Coffea arabica (Arabian coffee).